A 294-amino-acid polypeptide reads, in one-letter code: Formamidopyrimidine-DNA glycosylase (294 aa).

Pro-2 (schiff-base intermediate with DNA) is an active-site residue. Glu-3 (proton donor) is an active-site residue. The active-site Proton donor; for beta-elimination activity is Lys-58. 3 residues coordinate DNA: His-105, Arg-124, and Lys-167. An FPG-type zinc finger spans residues 258–294 (QVYDREGEPCRTRGCKGTVKRFTQNGRSTFWCPSCQK). Arg-284 (proton donor; for delta-elimination activity) is an active-site residue.

This sequence belongs to the FPG family. Monomer. Requires Zn(2+) as cofactor.

The enzyme catalyses Hydrolysis of DNA containing ring-opened 7-methylguanine residues, releasing 2,6-diamino-4-hydroxy-5-(N-methyl)formamidopyrimidine.. It carries out the reaction 2'-deoxyribonucleotide-(2'-deoxyribose 5'-phosphate)-2'-deoxyribonucleotide-DNA = a 3'-end 2'-deoxyribonucleotide-(2,3-dehydro-2,3-deoxyribose 5'-phosphate)-DNA + a 5'-end 5'-phospho-2'-deoxyribonucleoside-DNA + H(+). Involved in base excision repair of DNA damaged by oxidation or by mutagenic agents. Acts as a DNA glycosylase that recognizes and removes damaged bases. Has a preference for oxidized purines, such as 7,8-dihydro-8-oxoguanine (8-oxoG). Has AP (apurinic/apyrimidinic) lyase activity and introduces nicks in the DNA strand. Cleaves the DNA backbone by beta-delta elimination to generate a single-strand break at the site of the removed base with both 3'- and 5'-phosphates. This is Formamidopyrimidine-DNA glycosylase from Afipia carboxidovorans (strain ATCC 49405 / DSM 1227 / KCTC 32145 / OM5) (Oligotropha carboxidovorans).